A 380-amino-acid chain; its full sequence is Reducing-end xylose-releasing exo-oligoxylanase Rex8A (380 aa).

The Proton donor role is filled by glutamate 70. Aspartate 265 acts as the Proton acceptor in catalysis.

The protein belongs to the glycosyl hydrolase 8 (cellulase D) family.

It carries out the reaction Hydrolysis of (1-&gt;4)-beta-D-xylose residues from the reducing end of oligosaccharides.. The protein operates within glycan degradation; xylan degradation. Functionally, involved in depolymerization of xylan, a major component of the lignocellulosic substrates. Acts as an exo-oligoxylanase that efficiently hydrolyzes xylooligosaccharides, releasing xylose from their reducing ends. Hydrolyzes xylooligomers of 3 to 6 xylose units to xylose and xylobiose. Besides linear xylooligosaccharides, also hydrolyzes branched xylooligomers, such as xylooligomers decorated with 4-O-methyl-D-glucuronic acid moieties. Its proposed role is the degradation of xylooligomers produced by the activity of extracellular xylanases once they have been transported inside cells. Shows minor activity on polymeric xylan (glucuronoxylan from beechwood). Is not active on cellooligosaccharides or cellulosic substrates, or on other polysaccharides such as pectin, polygalacturonic acid, laminarin, or lichenan. The chain is Reducing-end xylose-releasing exo-oligoxylanase Rex8A from Paenibacillus barcinonensis.